The primary structure comprises 223 residues: Deoxyribose-phosphate aldolase (223 aa).

D89 serves as the catalytic Proton donor/acceptor. K152 (schiff-base intermediate with acetaldehyde) is an active-site residue. K181 functions as the Proton donor/acceptor in the catalytic mechanism.

The protein belongs to the DeoC/FbaB aldolase family. DeoC type 1 subfamily.

The protein localises to the cytoplasm. The catalysed reaction is 2-deoxy-D-ribose 5-phosphate = D-glyceraldehyde 3-phosphate + acetaldehyde. It functions in the pathway carbohydrate degradation; 2-deoxy-D-ribose 1-phosphate degradation; D-glyceraldehyde 3-phosphate and acetaldehyde from 2-deoxy-alpha-D-ribose 1-phosphate: step 2/2. Its function is as follows. Catalyzes a reversible aldol reaction between acetaldehyde and D-glyceraldehyde 3-phosphate to generate 2-deoxy-D-ribose 5-phosphate. This chain is Deoxyribose-phosphate aldolase, found in Bacillus cereus (strain ATCC 14579 / DSM 31 / CCUG 7414 / JCM 2152 / NBRC 15305 / NCIMB 9373 / NCTC 2599 / NRRL B-3711).